The primary structure comprises 895 residues: Pentatricopeptide repeat-containing protein At1g74600, chloroplastic (895 aa).

The N-terminal 71 residues, 1–71 (MNCLANESLN…CNLRTTKILQ (71 aa)), are a transit peptide targeting the chloroplast. 22 PPR repeats span residues 83–113 (DVFL…IPQP), 114–148 (DVVS…GFEA), 149–183 (NEIS…GYFF), 184–214 (YEVV…SLSA), 215–249 (NVYC…FQKP), 250–280 (DSYT…VIKC), 284–314 (DVFV…IPNP), 315–349 (SVVS…GVEI), 350–384 (NNCT…GFYL), 385–415 (DSSV…LDDI), 417–451 (RQNI…GLRT), 452–483 (DEFS…GLVL), 484–514 (DLTV…IPFK), 515–549 (DNAC…GTSP), 550–584 (DEST…GIDK), 585–615 (GMDL…LPEL), 616–650 (DPVS…GFTM), 651–685 (DSFA…GLCT), 686–716 (EPSV…INGP), 717–751 (DLIA…GFKP), 752–787 (DKVT…GIEP), and 788–818 (ENRH…MHIK). The type E motif; degenerate stretch occupies residues 824–895 (WGTLLAACKI…VQKEPGWSSV (72 aa)).

It belongs to the PPR family. PCMP-E subfamily.

The protein localises to the plastid. Its subcellular location is the chloroplast. This is Pentatricopeptide repeat-containing protein At1g74600, chloroplastic (PCMP-E69) from Arabidopsis thaliana (Mouse-ear cress).